Here is a 930-residue protein sequence, read N- to C-terminus: Isoleucine--tRNA ligase (930 aa).

A 'HIGH' region motif is present at residues 57 to 67; it reads PYANGNIHVGH. Residue Glu-554 participates in L-isoleucyl-5'-AMP binding. The 'KMSKS' region signature appears at 595-599; sequence KMSKS. Lys-598 provides a ligand contact to ATP. Positions 888, 891, 908, and 911 each coordinate Zn(2+).

It belongs to the class-I aminoacyl-tRNA synthetase family. IleS type 1 subfamily. As to quaternary structure, monomer. The cofactor is Zn(2+).

The protein localises to the cytoplasm. The enzyme catalyses tRNA(Ile) + L-isoleucine + ATP = L-isoleucyl-tRNA(Ile) + AMP + diphosphate. Its function is as follows. Catalyzes the attachment of isoleucine to tRNA(Ile). As IleRS can inadvertently accommodate and process structurally similar amino acids such as valine, to avoid such errors it has two additional distinct tRNA(Ile)-dependent editing activities. One activity is designated as 'pretransfer' editing and involves the hydrolysis of activated Val-AMP. The other activity is designated 'posttransfer' editing and involves deacylation of mischarged Val-tRNA(Ile). This is Isoleucine--tRNA ligase from Streptococcus pneumoniae (strain ATCC 700669 / Spain 23F-1).